The following is a 1334-amino-acid chain: MFYNQTVDKGKLKKLIAWAYQNYGSARCSQMADELKNLGFRFATKAGVSISVDDLTVPPAKRQMIESAEQEIRQTEQRYVRGEITEVERFQKVIDTWNSTSESLKDEVIRNFQVTDPLNSVYMMAFSGARGNMSQVRQLVGMRGLMANPQGEIIDLPIKTNFREGLTVTEYVISSYGARKGLVDTALRTADSGYLTRRLVDVSQDVIVREADCGTNRYVELTAMTDGDRVLIPLSDRLLGRSLAEDVVVNGEVIATRNQIIDDETAEKLGRLVDKIKVRSPLTCEAARSVCQTCYGWSLAHGHPVDMGEAVGIIAAQSIGEPGTQLTMRTFHTGGVFTGEVARQVRSPFEGTVRFLPGLSIRNVRTRHGDERDQVEAPGEIKLTPKDKTKETVTYSLTPGSLLFVTDGETVSEEQLLAEITSDKVQKSTEKATKDVTSDLAGEVLFSQLVPEEKTDRQGNTTRIAQRGGLLWILSGEVYNLPPGAEPVVSNGDQVQVGDVLAETKLVSTNGGLVRLAPNSREIDIVTASVSLDQAEVKVESSAGREQFIIHTGDGQSFLLKTTPGTKVQNHAIVAELIDDRYQTHTGGMIKYVDIEVAKGSRKQGYEITKGGTILWIPEETHEVNKDISLLQVEDGQYVEAGEEVVKDIFCNSSGVVEVIQKNDILREIIVKPGLLFMDLEPESSGIAQEQLIYPGTQLTPEVTIEELRQAEWVETNEGLGLLLRPVQEFTVQDQSTSPTQGSANQEGGRHIELRSVQRIFFKDGERVKSVEGCQLISTQLVLEISSEEPESVSHLTADIELEPIEDRDCQRLQLVILESLVLRRDSDNDPLGGNIQTRVLVQDGDEIPPGAVVARTEIQCKEAGEIRGIRKGSEAVRRLLIVSDRDEFILPLAVAPTVKARDLVIAEAEIAAGVLAPNSGQVLAVDKTATGYEIRLRKARPYRVSAGAILHIDEGDLVQRGDNLVLLVFERSKTGDIIQGLPRIEELLEARKPKEACVLARKPGVCQVEYQDSEIVDIKVVEDDGTISEYPLLGSQNPLVSDNQRIDVGQALTDGQANPHEILEVFFNYYVDSLGSYEAALKALEKTQMFLVDQVQSVYQSQGIDIADKHIEVIVRQMTSKVRIDDGGDTSMLPGELLELRQVETVNEAMSITGGAAAKYTPVLLGITKASLNTDSFISAASFQETTRVLTEAAIEGKSDWLRGLKENVIIGRLIPAGTGFNSHENTAGISDYTPPEEEYNYNNRSYYAPPGGLGLPPRPGFGDSSEDSDMILDDQTARAYAEGDVVDLEDDEMAFLSSRGSSRFSRQPISDRWSEADEEGEEDDFEEDYEEE.

Residues Cys-213, Cys-284, Cys-291, and Cys-294 each contribute to the Zn(2+) site. Positions 1299-1308 (SSRGSSRFSR) are enriched in low complexity. Positions 1299-1334 (SSRGSSRFSRQPISDRWSEADEEGEEDDFEEDYEEE) are disordered. The segment covering 1318–1334 (ADEEGEEDDFEEDYEEE) has biased composition (acidic residues).

Belongs to the RNA polymerase beta' chain family. RpoC2 subfamily. As to quaternary structure, in cyanobacteria the RNAP catalytic core is composed of 2 alpha, 1 beta, 1 beta', 1 gamma and 1 omega subunit. When a sigma factor is associated with the core the holoenzyme is formed, which can initiate transcription. Requires Zn(2+) as cofactor.

It catalyses the reaction RNA(n) + a ribonucleoside 5'-triphosphate = RNA(n+1) + diphosphate. Its function is as follows. DNA-dependent RNA polymerase catalyzes the transcription of DNA into RNA using the four ribonucleoside triphosphates as substrates. In Microcystis aeruginosa (strain NIES-843 / IAM M-2473), this protein is DNA-directed RNA polymerase subunit beta'.